The primary structure comprises 20 residues: DnaJ homolog subfamily C member 1 (20 aa).

Residues W1–Y20 lie on the Lumenal side of the membrane. The J domain occupies N18–Y20.

As to quaternary structure, interacts (via SANT 2 domain) with SERPINA3; the interaction delays the formation of the covalent inhibitory complex SERPINA3-chymotrypsin, but does not alter the catalytic activity of SERPINA3. Interacts (via SANT 2 domain) with ITIH4 (via C-terminus); the interaction protects ITIH4 against in vitro cleavage by kallikrein. Interacts (via J domain) with HSPA5. Interacts (via cytosolic domain) with ribosomes.

The protein resides in the endoplasmic reticulum membrane. It is found in the nucleus membrane. It localises to the microsome membrane. This Canis lupus familiaris (Dog) protein is DnaJ homolog subfamily C member 1 (DNAJC1).